Consider the following 216-residue polypeptide: Protein Syd (216 aa).

Belongs to the Syd family.

The protein localises to the cell inner membrane. Functionally, interacts with the SecY protein in vivo. May bind preferentially to an uncomplexed state of SecY, thus functioning either as a chelating agent for excess SecY in the cell or as a regulatory factor that negatively controls the translocase function. The protein is Protein Syd of Shewanella sp. (strain MR-7).